A 102-amino-acid chain; its full sequence is Small ribosomal subunit protein uS10 (102 aa).

The protein belongs to the universal ribosomal protein uS10 family. In terms of assembly, part of the 30S ribosomal subunit.

Its function is as follows. Involved in the binding of tRNA to the ribosomes. The protein is Small ribosomal subunit protein uS10 of Latilactobacillus sakei subsp. sakei (strain 23K) (Lactobacillus sakei subsp. sakei).